We begin with the raw amino-acid sequence, 186 residues long: MAQRERNREERGREERDSEFVDKLVHINRVAKVVKGGRRFGFAALIVVGDQKGRVGFGHGKAREVPEAIRKATEAAKRDMIFVPLRSGRTLHHDVEGRHGAGKVLLRAAPAGKGIIAGGPMRAVFETLGVQDVVAKSLGSSNPYNMVRATFDALKHQMHPKDIAAQRGIKYSTLQARRHDVVGSEE.

The region spanning 20-83 is the S5 DRBM domain; the sequence is FVDKLVHINR…EAAKRDMIFV (64 aa).

Belongs to the universal ribosomal protein uS5 family. As to quaternary structure, part of the 30S ribosomal subunit. Contacts proteins S4 and S8.

Its function is as follows. With S4 and S12 plays an important role in translational accuracy. Located at the back of the 30S subunit body where it stabilizes the conformation of the head with respect to the body. The protein is Small ribosomal subunit protein uS5 of Brucella ovis (strain ATCC 25840 / 63/290 / NCTC 10512).